The chain runs to 417 residues: Probable diacetyl reductase [(R)-acetoin forming] 2 (417 aa).

A Zn(2+)-binding site is contributed by Cys-39. The residue at position 63 (Ser-63) is a Phosphoserine. Zn(2+) is bound by residues His-64, Cys-120, Cys-123, Cys-131, and Gln-173. The segment at 380-417 (GELNREADNEKKEISELSSRKDQERLRESINEAKLRHT) is disordered. Residues 381–417 (ELNREADNEKKEISELSSRKDQERLRESINEAKLRHT) show a composition bias toward basic and acidic residues.

It belongs to the zinc-containing alcohol dehydrogenase family. It depends on Zn(2+) as a cofactor.

It is found in the cytoplasm. Its subcellular location is the nucleus. The catalysed reaction is (R)-acetoin + NAD(+) = diacetyl + NADH + H(+). Catalyzes the irreversible reduction of 2,3-butanediol to (S)-acetoin in the presence of NADH. This is Probable diacetyl reductase [(R)-acetoin forming] 2 (BDH2) from Saccharomyces cerevisiae (strain ATCC 204508 / S288c) (Baker's yeast).